The chain runs to 140 residues: Nucleoside diphosphate kinase (140 aa).

ATP contacts are provided by Lys-11, Phe-59, Arg-87, Thr-93, Arg-104, and Asn-114. His-117 acts as the Pros-phosphohistidine intermediate in catalysis.

This sequence belongs to the NDK family. Homotetramer. The cofactor is Mg(2+).

The protein localises to the cytoplasm. The enzyme catalyses a 2'-deoxyribonucleoside 5'-diphosphate + ATP = a 2'-deoxyribonucleoside 5'-triphosphate + ADP. It carries out the reaction a ribonucleoside 5'-diphosphate + ATP = a ribonucleoside 5'-triphosphate + ADP. Major role in the synthesis of nucleoside triphosphates other than ATP. The ATP gamma phosphate is transferred to the NDP beta phosphate via a ping-pong mechanism, using a phosphorylated active-site intermediate. This Rhodospirillum rubrum (strain ATCC 11170 / ATH 1.1.1 / DSM 467 / LMG 4362 / NCIMB 8255 / S1) protein is Nucleoside diphosphate kinase.